The following is a 220-amino-acid chain: MNSAKLIDHTLLKPESTRTQIDQIIDEAKAYHFKSVCVNPTHVKYAAERLADSEVLVCTVIGFPLGASTTATKAFETEDAIQNGADEIDMVINIGALKDGRFDDVQQDIEAVVKAAKGHTVKVIIETVLLDHDEIVKASELTKAAGADFVKTSTGFAGGGATAEDVKLMKDTVGADIEVKASGGVRNLEDFNKMVEAGATRIGASAGVQIMQGLEADSDY.

The Proton donor/acceptor role is filled by Asp-89. The Schiff-base intermediate with acetaldehyde role is filled by Lys-151. Lys-180 serves as the catalytic Proton donor/acceptor.

It belongs to the DeoC/FbaB aldolase family. DeoC type 1 subfamily.

The protein localises to the cytoplasm. The catalysed reaction is 2-deoxy-D-ribose 5-phosphate = D-glyceraldehyde 3-phosphate + acetaldehyde. Its pathway is carbohydrate degradation; 2-deoxy-D-ribose 1-phosphate degradation; D-glyceraldehyde 3-phosphate and acetaldehyde from 2-deoxy-alpha-D-ribose 1-phosphate: step 2/2. Its function is as follows. Catalyzes a reversible aldol reaction between acetaldehyde and D-glyceraldehyde 3-phosphate to generate 2-deoxy-D-ribose 5-phosphate. This chain is Deoxyribose-phosphate aldolase 2, found in Staphylococcus aureus (strain COL).